Here is a 503-residue protein sequence, read N- to C-terminus: Probable cytosol aminopeptidase (503 aa).

Mn(2+)-binding residues include lysine 271 and aspartate 276. The active site involves lysine 283. Mn(2+) contacts are provided by aspartate 294, aspartate 353, and glutamate 355. Residue arginine 357 is part of the active site.

This sequence belongs to the peptidase M17 family. Requires Mn(2+) as cofactor.

The protein resides in the cytoplasm. The enzyme catalyses Release of an N-terminal amino acid, Xaa-|-Yaa-, in which Xaa is preferably Leu, but may be other amino acids including Pro although not Arg or Lys, and Yaa may be Pro. Amino acid amides and methyl esters are also readily hydrolyzed, but rates on arylamides are exceedingly low.. It carries out the reaction Release of an N-terminal amino acid, preferentially leucine, but not glutamic or aspartic acids.. Its function is as follows. Presumably involved in the processing and regular turnover of intracellular proteins. Catalyzes the removal of unsubstituted N-terminal amino acids from various peptides. The sequence is that of Probable cytosol aminopeptidase from Chlorobium phaeobacteroides (strain DSM 266 / SMG 266 / 2430).